A 294-amino-acid polypeptide reads, in one-letter code: FAD-dependent monooxygenase SAT1 (294 aa).

Asp108 is an FAD binding site.

It belongs to the paxM FAD-dependent monooxygenase family. Requires FAD as cofactor.

It functions in the pathway mycotoxin biosynthesis. Functionally, FAD-dependent monooxygenase; part of the satratoxin SC1 cluster involved in the biosynthesis of satratoxins, trichothecene mycotoxins that are associated with human food poisonings. Satratoxins are suggested to be made by products of multiple gene clusters (SC1, SC2 and SC3) that encode 21 proteins in all, including polyketide synthases, acetyltransferases, and other enzymes expected to modify the trichothecene skeleton. SC1 encodes 10 proteins, SAT1 to SAT10. The largest are SAT8, which encodes a putative polyketide synthase (PKS) with a conventional non-reducing architecture, and SAT10, a putative protein containing four ankyrin repeats and thus may be involved in protein scaffolding. The putative short-chain reductase SAT3 may assist the PKS in some capacity. SAT6 contains a secretory lipase domain and acts probably as a trichothecene esterase. SAT5 encodes a putative acetyltransferase, and so, with SAT6, may affect endogenous protection from toxicity. The probable transcription factor SAT9 may regulate the expression of the SC1 cluster. SC2 encodes proteins SAT11 to SAT16, the largest of which encodes the putative reducing PKS SAT13. SAT11 is a cytochrome P450 monooxygenase, while SAT14 and SAT16 are probable acetyltransferases. The SC2 cluster may be regulated by the transcription factor SAT15. SC3 is a small cluster that encodes 5 proteins, SAT17 to SAT21. SAT21 is a putative MFS-type transporter which may have a role in exporting secondary metabolites. The four other proteins putatively encoded in SC3 include the taurine hydroxylase-like protein SAT17, the O-methyltransferase SAT18, the acetyltransferase SAT19, and the Cys6-type zinc finger SAT20, the latter being probably involved in regulation of SC3 expression. The sequence is that of FAD-dependent monooxygenase SAT1 from Stachybotrys chartarum (strain CBS 109288 / IBT 7711) (Toxic black mold).